The following is a 675-amino-acid chain: Regulator of G-protein signaling 9 (675 aa).

The DEP domain maps to 30–105 (PETGVRMHNQ…PDSSLYRFQT (76 aa)). Positions 222 to 283 (VRKEIMYYQQ…DTQFWDLNAK (62 aa)) constitute a G protein gamma domain. In terms of domain architecture, RGS spans 299-414 (NFSELIRDPK…LKSPIYKEML (116 aa)). 2 disordered regions span residues 524–571 (RVAL…PPKA) and 637–662 (DSGT…EKEV). Over residues 542–551 (SGANSGPSVT) the composition is skewed to polar residues. 2 stretches are compositionally biased toward basic and acidic residues: residues 552 to 562 (ENREPSADHSR) and 646 to 662 (DDPR…EKEV).

As to quaternary structure, heterodimer with GNB5. Interacts with RGS7BP, leading to regulate the subcellular location of the heterodimer formed with GNB5. Component of the RGS9-1-Gbeta5 complex composed of RGS9 (RGS9-1), Gbeta5 (GNB5) and RGS9BP. Interacts with PDE6G and GNAT1. Retinal isoform 1 is light-dependent phosphorylated at 'Ser-475'. Phosphorylation is decreased by light exposition. Interaction with RGS9BP is decreased when isoform 1 is phosphorylated at 'Ser-475'. In terms of tissue distribution, isoform 1 is expressed in photoreceptor outer segments. Isoform 2 is expressed in brain striatum.

The protein resides in the membrane. Inhibits signal transduction by increasing the GTPase activity of G protein alpha subunits thereby driving them into their inactive GDP-bound form. Binds to GNAT1. Involved in phototransduction; key element in the recovery phase of visual transduction. In Mus musculus (Mouse), this protein is Regulator of G-protein signaling 9 (Rgs9).